The chain runs to 1512 residues: Sterol 3-beta-glucosyltransferase (1512 aa).

Disordered stretches follow at residues Phe-22–Leu-50 and Asp-150–Val-222. Positions Ser-156–Ile-169 are enriched in acidic residues. Residues Thr-190–Val-222 show a composition bias toward low complexity. The GRAM 1 domain maps to Leu-296–Asp-331. One can recognise a PH domain in the interval Ser-359–Phe-520. The GRAM 2 domain maps to Arg-816–Arg-880. UDP-alpha-D-glucose is bound by residues Ser-1024, Arg-1025, Asp-1027, Asn-1299, Ile-1328, His-1330, His-1343, Ser-1346, Gly-1347, Thr-1348, Asp-1367, and Gln-1368. The interval Tyr-1450–Asn-1512 is disordered. Residues Thr-1467 to Ser-1493 show a composition bias toward acidic residues. A compositionally biased stretch (polar residues) spans Gly-1501–Asn-1512.

This sequence belongs to the glycosyltransferase 28 family.

The protein resides in the cytoplasm. The protein localises to the membrane. It catalyses the reaction a sterol + UDP-alpha-D-glucose = a sterol 3-beta-D-glucoside + UDP + H(+). It carries out the reaction ergosterol + UDP-alpha-D-glucose = ergosteryl 3-beta-D-glucoside + UDP + H(+). Sterol glycosyltransferase responsible for the glycosylation of ergosterol to form ergosterol-glucoside. The sequence is that of Sterol 3-beta-glucosyltransferase from Candida albicans (strain SC5314 / ATCC MYA-2876) (Yeast).